The chain runs to 362 residues: Probable dual-specificity RNA methyltransferase RlmN (362 aa).

Glu-105 acts as the Proton acceptor in catalysis. The region spanning 111 to 344 is the Radical SAM core domain; that stretch reads HEYGNSICVT…VTIRREQGHD (234 aa). Residues Cys-118 and Cys-349 are joined by a disulfide bond. [4Fe-4S] cluster-binding residues include Cys-125, Cys-129, and Cys-132. S-adenosyl-L-methionine contacts are provided by residues 175 to 176, Ser-207, 230 to 232, and Asn-306; these read GE and SLH. The active-site S-methylcysteine intermediate is the Cys-349.

The protein belongs to the radical SAM superfamily. RlmN family. [4Fe-4S] cluster is required as a cofactor.

It is found in the cytoplasm. It catalyses the reaction adenosine(2503) in 23S rRNA + 2 reduced [2Fe-2S]-[ferredoxin] + 2 S-adenosyl-L-methionine = 2-methyladenosine(2503) in 23S rRNA + 5'-deoxyadenosine + L-methionine + 2 oxidized [2Fe-2S]-[ferredoxin] + S-adenosyl-L-homocysteine. The catalysed reaction is adenosine(37) in tRNA + 2 reduced [2Fe-2S]-[ferredoxin] + 2 S-adenosyl-L-methionine = 2-methyladenosine(37) in tRNA + 5'-deoxyadenosine + L-methionine + 2 oxidized [2Fe-2S]-[ferredoxin] + S-adenosyl-L-homocysteine. Functionally, specifically methylates position 2 of adenine 2503 in 23S rRNA and position 2 of adenine 37 in tRNAs. This Bacillus anthracis (strain A0248) protein is Probable dual-specificity RNA methyltransferase RlmN.